We begin with the raw amino-acid sequence, 338 residues long: Transcription factor MYB76 (338 aa).

HTH myb-type domains lie at 9 to 65 (GEGL…KPDI) and 66 to 116 (KRGE…KKRL). DNA-binding regions (H-T-H motif) lie at residues 37 to 61 (WRDI…TNYL) and 89 to 112 (WSVI…NTHL). Disordered stretches follow at residues 123–171 (PVTH…SSNL) and 176–195 (SKIS…CKKR). A compositionally biased stretch (basic and acidic residues) spans 140–154 (MKFDFQKKSNQDEHS). The span at 155-171 (SQSSSTTPASLPLSSNL) shows a compositional bias: low complexity.

Can form complexes with MYC2, MYC3 or MYC4. As to expression, expressed in both vegetative and generative organs. Mostly present in inflorescences, flowers and seedlings, in the transition zone between roots and the foliar part, and stems, and, to a lower extent, in leaves (in midvein and trichomes).

The protein resides in the nucleus. Plays a role in determining the spatial distribution of aliphatic glucosinolates (AGLSs) within the leaf, mostly short chained. Together with MYB28/HAG1 and MYB29/HAG3, promotes aliphatic glucosinolate biosynthesis and represses indolic glucosinolate biosynthesis, but could not activate AGSL biosynthesis on its own. The polypeptide is Transcription factor MYB76 (MYB76) (Arabidopsis thaliana (Mouse-ear cress)).